The primary structure comprises 338 residues: Nicotinate-nucleotide--dimethylbenzimidazole phosphoribosyltransferase (338 aa).

The active-site Proton acceptor is the Glu-305.

The protein belongs to the CobT family.

The catalysed reaction is 5,6-dimethylbenzimidazole + nicotinate beta-D-ribonucleotide = alpha-ribazole 5'-phosphate + nicotinate + H(+). The protein operates within nucleoside biosynthesis; alpha-ribazole biosynthesis; alpha-ribazole from 5,6-dimethylbenzimidazole: step 1/2. Catalyzes the synthesis of alpha-ribazole-5'-phosphate from nicotinate mononucleotide (NAMN) and 5,6-dimethylbenzimidazole (DMB). This is Nicotinate-nucleotide--dimethylbenzimidazole phosphoribosyltransferase from Rhizobium meliloti (strain 1021) (Ensifer meliloti).